The primary structure comprises 102 residues: MAKEKIRIRLKAYDHRILDQSAEKIVETAKRSGATVSGPIPLPTEKTVYTILRAVHKYKDSREQFEMRTHKRLIDIVSPTPQTVDSLMRLDLPSGVDIEIKL.

Belongs to the universal ribosomal protein uS10 family. In terms of assembly, part of the 30S ribosomal subunit.

Functionally, involved in the binding of tRNA to the ribosomes. The polypeptide is Small ribosomal subunit protein uS10 (Bacillus thuringiensis (strain Al Hakam)).